The sequence spans 235 residues: Dual specificity protein phosphatase 15 (235 aa).

Gly2 carries the N-myristoyl glycine lipid modification. The Tyrosine-protein phosphatase domain occupies 4 to 144; sequence GMTKVLPGLY…LEEFGWANSQ (141 aa). Residue Cys88 is the Phosphocysteine intermediate of the active site. The segment covering 183-193 has biased composition (low complexity); that stretch reads AASATTASSAA. Residues 183–212 form a disordered region; sequence AASATTASSAAEGTLQRLVPRSPRDSHQPL.

This sequence belongs to the protein-tyrosine phosphatase family. Non-receptor class dual specificity subfamily. As to expression, isoform 1 is expressed in testis; predominantly in developing spermatocytes (at protein level). Isoform 2 is highly expressed in testis. Expressed in spinal cord and specifically in oligodendroglial cells. Expressed in embryonic brain cortex; down-regulated in mice with experimental autoimmune encephalomyelitis (EAE).

The protein localises to the cell membrane. The catalysed reaction is O-phospho-L-tyrosyl-[protein] + H2O = L-tyrosyl-[protein] + phosphate. It catalyses the reaction O-phospho-L-seryl-[protein] + H2O = L-seryl-[protein] + phosphate. It carries out the reaction O-phospho-L-threonyl-[protein] + H2O = L-threonyl-[protein] + phosphate. In terms of biological role, may dephosphorylate MAPK13, ATF2, ERBB3, PDGFRB and SNX6. May play a role in the regulation of oligodendrocyte differentiation. May play a role in the regulation of myelin formation. Involved in the regulation of Erk1/2 phosphorylation in Schwann cells; the signaling may be linked to the regulation of myelination. This Mus musculus (Mouse) protein is Dual specificity protein phosphatase 15.